A 399-amino-acid polypeptide reads, in one-letter code: Bombesin receptor subtype-3 (399 aa).

The segment covering 1-31 (MSQRQPQSPNQTLISTTNDTESSSSVVPNDS) has biased composition (polar residues). The tract at residues 1–38 (MSQRQPQSPNQTLISTTNDTESSSSVVPNDSTNKRRTG) is disordered. The Extracellular segment spans residues 1–41 (MSQRQPQSPNQTLISTTNDTESSSSVVPNDSTNKRRTGDNS). N-linked (GlcNAc...) asparagine glycans are attached at residues asparagine 10, asparagine 18, and asparagine 29. Residues 42–63 (PGIEALCAIYITYAVIISVGIL) traverse the membrane as a helical segment. Topologically, residues 64–82 (GNAILIKVFFKTKSMQTVP) are cytoplasmic. A helical transmembrane segment spans residues 83–103 (NIFITSLAFGDLLLLLTCVPV). Residues 104 to 121 (DVTHYLAEGWLFGRIGCK) lie on the Extracellular side of the membrane. Residues cysteine 120 and cysteine 203 are joined by a disulfide bond. The helical transmembrane segment at 122–143 (VLSFIRLTSVGVSVFTLTILSA) threads the bilayer. Over 144–163 (DRYKAVVKPLERQPPNAILK) the chain is Cytoplasmic. A helical transmembrane segment spans residues 164–184 (TCAKAGCIWIMSMIIALPEAI). Residues 185–220 (FSNVYTFQDPDKNVTFKACASYPVSERLLQEIHSLL) lie on the Extracellular side of the membrane. A helical membrane pass occupies residues 221–241 (CFLVFYIIPLSIISVYYSLIA). The Cytoplasmic portion of the chain corresponds to 242–272 (RTLYKSTLNIPTEEQRHARKQIESRKRIAKT). The chain crosses the membrane as a helical span at residues 273–293 (VLVLVALFALCWLPNHLLYLY). The Extracellular portion of the chain corresponds to 294-313 (RSFTSQTYMDSSTVHLFVTI). Residues 314 to 333 (ISRILAFSNSCVNPFALYWL) traverse the membrane as a helical segment. The Cytoplasmic portion of the chain corresponds to 334–399 (SNTFQQHFKA…CSVKKEDDRV (66 aa)).

It belongs to the G-protein coupled receptor 1 family. In terms of assembly, interacts with C6orf89.

The protein resides in the cell membrane. Its function is as follows. Role in sperm cell division, maturation, or function. This receptor mediates its action by association with G proteins that activate a phosphatidylinositol-calcium second messenger system. The sequence is that of Bombesin receptor subtype-3 (BRS3) from Ovis aries (Sheep).